The primary structure comprises 93 residues: Small ribosomal subunit protein uS17 (93 aa).

This sequence belongs to the universal ribosomal protein uS17 family. As to quaternary structure, part of the 30S ribosomal subunit.

Its function is as follows. One of the primary rRNA binding proteins, it binds specifically to the 5'-end of 16S ribosomal RNA. The polypeptide is Small ribosomal subunit protein uS17 (Bordetella avium (strain 197N)).